Here is a 235-residue protein sequence, read N- to C-terminus: Small ribosomal subunit protein uS2c (235 aa).

It belongs to the universal ribosomal protein uS2 family.

It localises to the plastid. The protein localises to the chloroplast. This is Small ribosomal subunit protein uS2c (rps2) from Huperzia lucidula (Shining clubmoss).